A 515-amino-acid chain; its full sequence is Anthranilate synthase component 1 (515 aa).

Residues threonine 40 and 291-293 contribute to the L-tryptophan site; that span reads PYM. 328–329 serves as a coordination point for chorismate; that stretch reads GT. Position 361 (glutamate 361) interacts with Mg(2+). Chorismate contacts are provided by residues tyrosine 449, arginine 469, 483-485, and glycine 485; that span reads GAG. Glutamate 498 provides a ligand contact to Mg(2+).

The protein belongs to the anthranilate synthase component I family. As to quaternary structure, heterotetramer consisting of two non-identical subunits: a beta subunit (TrpG) and a large alpha subunit (TrpE). Mg(2+) is required as a cofactor.

It carries out the reaction chorismate + L-glutamine = anthranilate + pyruvate + L-glutamate + H(+). It functions in the pathway amino-acid biosynthesis; L-tryptophan biosynthesis; L-tryptophan from chorismate: step 1/5. Feedback inhibited by tryptophan. Functionally, part of a heterotetrameric complex that catalyzes the two-step biosynthesis of anthranilate, an intermediate in the biosynthesis of L-tryptophan. In the first step, the glutamine-binding beta subunit (TrpG) of anthranilate synthase (AS) provides the glutamine amidotransferase activity which generates ammonia as a substrate that, along with chorismate, is used in the second step, catalyzed by the large alpha subunit of AS (TrpE) to produce anthranilate. In the absence of TrpG, TrpE can synthesize anthranilate directly from chorismate and high concentrations of ammonia. The protein is Anthranilate synthase component 1 (trpE) of Buchnera aphidicola subsp. Schizaphis graminum (strain Sg).